An 846-amino-acid chain; its full sequence is Translation initiation factor IF-2 (846 aa).

The tract at residues 199–219 (KREEEEKKSKAKKAGGKGFKK) is disordered. A compositionally biased stretch (basic residues) spans 207-219 (SKAKKAGGKGFKK). Residues 345–512 (SRAPVVTIMG…AVLLQSEVLE (168 aa)) form the tr-type G domain. A G1 region spans residues 354 to 361 (GHVDHGKT). 354–361 (GHVDHGKT) serves as a coordination point for GTP. A G2 region spans residues 379–383 (GITQH). The segment at 400-403 (DTPG) is G3. GTP contacts are provided by residues 400–404 (DTPGH) and 454–457 (NKID). The interval 454-457 (NKID) is G4. Residues 490 to 492 (SAK) form a G5 region.

Belongs to the TRAFAC class translation factor GTPase superfamily. Classic translation factor GTPase family. IF-2 subfamily.

The protein localises to the cytoplasm. Functionally, one of the essential components for the initiation of protein synthesis. Protects formylmethionyl-tRNA from spontaneous hydrolysis and promotes its binding to the 30S ribosomal subunits. Also involved in the hydrolysis of GTP during the formation of the 70S ribosomal complex. The polypeptide is Translation initiation factor IF-2 (Francisella tularensis subsp. holarctica (strain LVS)).